The following is a 474-amino-acid chain: Cysteine--tRNA ligase (474 aa).

Residue cysteine 27 participates in Zn(2+) binding. The 'HIGH' region signature appears at 29–39; sequence PTVYNYIHIGN. Zn(2+)-binding residues include cysteine 212, histidine 237, and glutamate 241. A 'KMSKS' region motif is present at residues 271–275; the sequence is KMSKS. Lysine 274 contacts ATP.

This sequence belongs to the class-I aminoacyl-tRNA synthetase family. In terms of assembly, monomer. The cofactor is Zn(2+).

The protein localises to the cytoplasm. It catalyses the reaction tRNA(Cys) + L-cysteine + ATP = L-cysteinyl-tRNA(Cys) + AMP + diphosphate. This chain is Cysteine--tRNA ligase, found in Lactobacillus delbrueckii subsp. bulgaricus (strain ATCC 11842 / DSM 20081 / BCRC 10696 / JCM 1002 / NBRC 13953 / NCIMB 11778 / NCTC 12712 / WDCM 00102 / Lb 14).